The following is a 527-amino-acid chain: MKAESGQTSRRILCVFPRYTKSFGTFQHSYPLMDDVAAFMPPQGLLVIAAYLPDEWSVRFVDENIRAATADDFAWADAVFVSGMHIQRQQMNDICRRAHDFDLPVALGGPSVSACPDYYPNFDYLHVGELGDATDQLIAKLTHDVTRPKRQVVFTTEDRLDMTLFPIPAYELAECSKYLLGSIQYSSGCPYQCEFCDIPGLYGRNPRLKTPEQIITELDRMIECGIRGSVYFVDDNFIGNRKAALDLLPHLVEWQKRTGFQLQLACEATLNIAKRPEILELMREAYFCTIFVGIETPDPTALKAMHKDHNMMVPILEGVRTISSYGIEVVSGIILGLDTDTPETGEFLMQFIEQSQIPLLTINLLQALPKTPLWDRLQREGRLVHDDNRESNVDFLLPHDQVVAMWKDCMARAYQPEALLKRYDYQIAHAYATRLHPSTPQRASKANIKRGMIMLRNIIWQIGIRGDYKLAFWKFALRRLIRGDIENLLLVMVVAHHLIIYAREASRGHANASNYSIRLREAAVPAE.

A B12-binding domain is found at 36 to 148; sequence VAAFMPPQGL…AKLTHDVTRP (113 aa). A Radical SAM core domain is found at 173 to 408; that stretch reads AECSKYLLGS…HDQVVAMWKD (236 aa). Residues C189, C193, and C196 each coordinate [4Fe-4S] cluster.

It belongs to the radical SAM superfamily. Requires [4Fe-4S] cluster as cofactor.

Its function is as follows. Required for methylation of hopanoids at the C-2 position. The protein is Hopanoid C-2 methylase of Rhodopseudomonas palustris (strain TIE-1).